Reading from the N-terminus, the 178-residue chain is GTP-dependent dephospho-CoA kinase (178 aa).

Residues Asp-43, Ile-44, Val-45, Asp-62, Lys-64, and Glu-120 each contribute to the GTP site.

Belongs to the GTP-dependent DPCK family.

The catalysed reaction is 3'-dephospho-CoA + GTP = GDP + CoA + H(+). It functions in the pathway cofactor biosynthesis; coenzyme A biosynthesis. Its function is as follows. Catalyzes the GTP-dependent phosphorylation of the 3'-hydroxyl group of dephosphocoenzyme A to form coenzyme A (CoA). The polypeptide is GTP-dependent dephospho-CoA kinase (Natronomonas pharaonis (strain ATCC 35678 / DSM 2160 / CIP 103997 / JCM 8858 / NBRC 14720 / NCIMB 2260 / Gabara) (Halobacterium pharaonis)).